Here is a 327-residue protein sequence, read N- to C-terminus: MAKAPMRVAVTGAAGQIGYSLLFRIANGDMLGKDQPVILQLLDLPQAQAAVKGVVMELEDCAFPLLAGVVITDDPKVAFKDADVALLVGARPRSKGMERKDLLEANAQIFTVQGKALDEVASRDVKVLVVGNPANTNAYIAMKSAPNLKRENFTAMLRLDHNRALSQIAAKTGKPVSSIEKMFVWGNHSPTMYADYRYATVDGKSVKDMINDPVWNNDVFLPTVGKRGAAIIEARGLSSAASAANAAIDHVHDWVLGSNGKVVTMGIPSNGEYGIPNDVMFGYPVTTANGKYEIVKGLEIDAYSQEKINITLKELEEERAGVQHLLG.

12-18 (GAAGQIG) contacts NAD(+). Substrate contacts are provided by Arg93 and Arg99. Residues Asn106, Gln113, and 130-132 (VGN) contribute to the NAD(+) site. Substrate contacts are provided by Asn132 and Arg163. Residue His188 is the Proton acceptor of the active site.

The protein belongs to the LDH/MDH superfamily. MDH type 2 family.

The enzyme catalyses (S)-malate + NAD(+) = oxaloacetate + NADH + H(+). Its function is as follows. Catalyzes the reversible oxidation of malate to oxaloacetate. The protein is Malate dehydrogenase of Cupriavidus metallidurans (strain ATCC 43123 / DSM 2839 / NBRC 102507 / CH34) (Ralstonia metallidurans).